Consider the following 142-residue polypeptide: Large ribosomal subunit protein uL13 (142 aa).

It belongs to the universal ribosomal protein uL13 family. In terms of assembly, part of the 50S ribosomal subunit.

Functionally, this protein is one of the early assembly proteins of the 50S ribosomal subunit, although it is not seen to bind rRNA by itself. It is important during the early stages of 50S assembly. The polypeptide is Large ribosomal subunit protein uL13 (Sodalis glossinidius (strain morsitans)).